Consider the following 347-residue polypeptide: MKLTSEKLPKNPFYASVSQYAAKNQKFFQWKKEKTDYTHANLVDKALQLLKERILKGDTLAYFLRGQLYFEEGWYEEALEQFEEIKEKDHQATYQLGVMYYDGLGTTLDAEKGVDYMKKILDSPCPKARHLKFAAAYNLGRAYYEGKGVKRSNEEAERLWLIAADNGNPKASVKAQSMLGLYYSTKEPKELEKAFYWHSEACGNGNLESQGALGLMYLYGQGIRQDTEAALQCLREAAERGNVYAQGNLVEYYYKMKFFTKCVAFSKRIADYDEVHDIPMIAQVTDCLPEFIGRGMAMASFYHARCLQLGLGITRDETTAKHYYSKACRLNPALADELHSLLIRQRI.

Residues 59–92 (TLAYFLRGQLYFEEGWYEEALEQFEEIKEKDHQA) form a TPR repeat. Sel1-like repeat units lie at residues 93 to 125 (TYQL…DSPC), 133 to 168 (FAAA…DNGN), 173 to 206 (VKAQ…GNGN), 207 to 242 (LESQ…ERGN), 243 to 277 (VYAQ…EVHD), and 297 to 332 (AMAS…RLNP).

As to quaternary structure, interacts with LRP2.

It is found in the cytoplasm. Functionally, may act as an adapter that regulates LRP2 function. The polypeptide is LRP2-binding protein (LRP2BP) (Homo sapiens (Human)).